The following is an 85-amino-acid chain: Small ribosomal subunit protein uS17 (85 aa).

The protein belongs to the universal ribosomal protein uS17 family. Part of the 30S ribosomal subunit.

In terms of biological role, one of the primary rRNA binding proteins, it binds specifically to the 5'-end of 16S ribosomal RNA. This is Small ribosomal subunit protein uS17 from Actinobacillus succinogenes (strain ATCC 55618 / DSM 22257 / CCUG 43843 / 130Z).